The primary structure comprises 434 residues: Solute carrier RCH1 (434 aa).

At 1–15 the chain is on the cytoplasmic side; that stretch reads MKTQYSLIRKIWAHS. A helical transmembrane segment spans residues 16–36; that stretch reads VTEFLKSQWFFICLAILIVIA. Topologically, residues 37-50 are extracellular; it reads RFAPNFARDGGLIK. A helical transmembrane segment spans residues 51 to 71; it reads GQYSIGYGCVAWIFLQSGLGM. Topologically, residues 72–87 are cytoplasmic; that stretch reads KSRSLMANMLNWRAHA. The helical transmembrane segment at 88 to 108 threads the bilayer; sequence TILVLSFLITSSIVYGFCCAV. Over 109–118 the chain is Extracellular; the sequence is KAANDPKIDD. Residues 119–139 form a helical membrane-spanning segment; the sequence is WVLIGLILTATCPTTVASNVI. Topologically, residues 140 to 149 are cytoplasmic; it reads MTTNAGGNSL. A helical membrane pass occupies residues 150–170; sequence LCVCEVFIGNLLGAFITPALV. Over 171-199 the chain is Extracellular; sequence QMFTNRAPFAYGNPATGNGIGALYGRVMK. Residues 200–220 traverse the membrane as a helical segment; sequence QVGLSVFVPLFVGQVIQNCFP. Topologically, residues 221–234 are cytoplasmic; it reads KGTAYYLGFLKKYH. A helical membrane pass occupies residues 235–255; sequence IKIGSYMLLLIMFSSFSTAFY. Topologically, residues 256–264 are extracellular; it reads QDAFTSVSH. A helical membrane pass occupies residues 265–285; the sequence is VCIIFLCFFNLGIYIFFTGLS. The Cytoplasmic portion of the chain corresponds to 286-327; sequence YLCARPWFILKLFPHEPIEGKSTRLYRYSYNIFRPFYYSKED. The helical transmembrane segment at 328–348 threads the bilayer; it reads AICIMFCGPAKTAALGVSLIT. Topologically, residues 349-362 are extracellular; the sequence is SQYGDKKEHLGKLL. The chain crosses the membrane as a helical span at residues 363–383; sequence VPLVLYQVEQVMTANFFVSLF. At 384 to 434 the chain is on the cytoplasmic side; that stretch reads KRWIQKDAQADGSESSCANENEEVDLEKIISIGTGENQSVLSNNVPYTQPR. A Phosphoserine modification is found at S425.

The protein belongs to the bile acid:sodium symporter (BASS) (TC 2.A.28) family.

The protein resides in the cell membrane. It is found in the bud neck. Its function is as follows. Solute carrier protein that negatively regulates the cytosolic calcium homeostasis in response to high levels of extracellular calcium. The protein is Solute carrier RCH1 of Saccharomyces cerevisiae (strain ATCC 204508 / S288c) (Baker's yeast).